A 1134-amino-acid chain; its full sequence is Ovochymase-1 (1134 aa).

An N-terminal signal peptide occupies residues 1–22 (MGLLASAGLLLLLVIGHPRSLG). Positions 23-46 (LKCGIRMVNMKSKEPAVGSRFFSR) are cleaved as a propeptide — activation peptide. Residues 38–296 (AVGSRFFSRI…LMDFITQNLF (259 aa)) form the Peptidase S1 1 domain. N-linked (GlcNAc...) asparagine glycosylation is present at Asn-52. An intrachain disulfide couples Cys-72 to Cys-88. His-87 acts as the Charge relay system in catalysis. The N-linked (GlcNAc...) asparagine glycan is linked to Asn-99. Glu-116 serves as a coordination point for Ca(2+). Asp-139 (charge relay system) is an active-site residue. 3 cysteine pairs are disulfide-bonded: Cys-173/Cys-243, Cys-204/Cys-222, and Cys-233/Cys-262. Ser-237 functions as the Charge relay system in the catalytic mechanism. CUB domains are found at residues 284-410 (VSEL…VTAV) and 419-531 (CGSL…FTIL). A glycan (N-linked (GlcNAc...) asparagine) is linked at Asn-324. Disulfide bonds link Cys-341–Cys-373, Cys-419–Cys-446, and Cys-473–Cys-494. Asn-431 carries an N-linked (GlcNAc...) asparagine glycan. Residue Asn-507 is glycosylated (N-linked (GlcNAc...) asparagine). The 238-residue stretch at 575–812 (IAGGEEACPH…FLDWIQSKIN (238 aa)) folds into the Peptidase S1 2 domain. Cysteines 600 and 616 form a disulfide. Active-site charge relay system residues include His-615 and Asp-664. Disulfide bonds link Cys-698–Cys-769, Cys-729–Cys-747, Cys-759–Cys-788, and Cys-846–Cys-873. Ser-763 acts as the Charge relay system in catalysis. The 112-residue stretch at 846 to 957 (CSEAELEKPR…GAFGISYIVL (112 aa)) folds into the CUB 3 domain. Residue Asn-1106 is glycosylated (N-linked (GlcNAc...) asparagine).

Belongs to the peptidase S1 family.

The protein localises to the secreted. This chain is Ovochymase-1 (OVCH1), found in Homo sapiens (Human).